The following is a 957-amino-acid chain: MPGIIYILCSILLIESQYYVASENAEIRSSCRTAPNDLVFILDGSWSVGPENFEILKKWVVNITSNFNIGPKFTQVGVVQYSDYPILEIPLGSYESIDDLSRRTQSIQYLGGNTQTGNAIQFAIDNLFARSLRPLTKIAIVLTDGKSQDDVKHIAEEARKNKITLFAIGVGSEIEESELRAIANKPSSTYVFYVEDYIAISRIREIMKQKLCEESVCPTRIPVAARDEKGFDILLGLGINKKKAKRVEGSRPRNKAYEITSQIDLTEFTGNVFPEGLPPSYVFISTLRFKIKKKWDLWRILALDGTIQTAVSLNGEEKTLSFTTTNEENGTQAITFTTPGVKKLFDEEWHQIRLLVTEEDITLYVDDQEIETRKLLPVIGIYISGQTQIGKYPAREESVQFTLQKLRIYCDPEQNKRETACEIPGTNGECLNGPSDVGGTPAPCICPPGEKGDPGPKGDSGQPGNPGSPGQPGPDGKHGFQGTSGSPGIPGSPGVQGPRGFAGLKGNTGQDGEKGDRGMPGFPGLHGQPGIKGEMGPKGDKGDIGIDGKKGTKGDKGGNGATGKPGRHGEPGSYGKDGIPGYPGQKGEEGKPGPPGMEGLRGLPGIPGIPGNDGANGLKGETGLSGEPGARGPTGTPGISGPEGISGPQGPVGPKGNKGETGPPGKASPAGMKGEKGEMGIPGQQGYTGIPGLMGPKGDKGNLGERGMQGHKGEHGSSGMPGLKGEHGVTGSKGEKGEIGEHGHRGITGPRGEPGNMGLIGAPGPRGMSGERGTQGLPGPKGQQGKEQSEAFIRQICLDVLKAQLPSLIQNDIRQNCNQCKTQEGSPGLPGPPGPVGPEGTRGHPGLPGRNGFSGLVGQPGLPGIPGTKGLPGKPGAKGNKGDIEPGPQGSPGVPGPAGLPGVGKDGRTGPLGPPGREGDRGPPGTQGPPGDAGICDPSLCYGAVMRRDPFRKGPNY.

A signal peptide spans 1-16 (MPGIIYILCSILLIES). The VWFA domain occupies 37-211 (DLVFILDGSW…RIREIMKQKL (175 aa)). The 183-residue stretch at 230-412 (GFDILLGLGI…LQKLRIYCDP (183 aa)) folds into the Laminin G-like domain. 2 disordered regions span residues 441–788 (PAPC…GKEQ) and 820–935 (CKTQ…DAGI). Collagen-like domains are found at residues 448–501 (PGEK…PRGF), 502–543 (AGLK…DKGD), 544–591 (IGID…EEGK), 592–642 (PGPP…ISGP), 643–684 (EGIS…IPGQ), 685–741 (QGYT…EIGE), 742–786 (HGHR…QQGK), and 825–882 (GSPG…GNKG). The span at 483–498 (TSGSPGIPGSPGVQGP) shows a compositional bias: low complexity. The span at 535–556 (MGPKGDKGDIGIDGKKGTKGDK) shows a compositional bias: basic and acidic residues. 2 stretches are compositionally biased toward low complexity: residues 597–616 (MEGL…DGAN) and 633–649 (PTGT…SGPQ). The span at 733–744 (KGEKGEIGEHGH) shows a compositional bias: basic and acidic residues. The span at 775-786 (QGLPGPKGQQGK) shows a compositional bias: low complexity.

Belongs to the fibril-associated collagens with interrupted helices (FACIT) family.

It localises to the secreted. The protein resides in the extracellular space. It is found in the extracellular matrix. The protein localises to the cytoplasm. This is Collagen alpha-1(XXI) chain (col21a1) from Xenopus laevis (African clawed frog).